A 203-amino-acid chain; its full sequence is Calcineurin B-like protein 5 (203 aa).

The N-myristoyl glycine moiety is linked to residue Gly2. EF-hand domains are found at residues 30–65, 66–101, 103–138, and 147–182; these read EVEVLHGLFIKLTSCLSNDNLLTKEKFQFILIKNTK, KRSLSAERIFGLFDMRNDGAIDFGEFVHTLNIFHPN, SPRDKAIFAFRLYDTRETGFIEPEEVKEMIIDVLEE, and IIDSIVSKTFEEADWKKDGIIDLEEWENFVATYPLT.

It belongs to the calcineurin regulatory subunit family. In terms of assembly, homodimer. Interacts with PP2CA, CIPK2, CIPK11, CIPK23 and CIPK24. Both N-myristoylation and calcium-mediated conformational changes are essential for its function. In terms of tissue distribution, expressed in green tissues, but not in the roots.

It is found in the cytoplasm. It localises to the nucleus. In terms of biological role, acts as a calcium sensor. CBL proteins interact with CIPK serine-threonine protein kinases. Binding of a CBL protein to the regulatory NAF domain of a CIPK protein lead to the activation of the kinase in a calcium-dependent manner. May function as a positive regulator of salt or drought responses. In Arabidopsis thaliana (Mouse-ear cress), this protein is Calcineurin B-like protein 5 (CBL5).